Reading from the N-terminus, the 881-residue chain is MHPFYQLFRNIQSLGEEEVQELLGPPEDALPLLAGEGLNHRVADALNLQLPTADLEWIHKTNVITGLYSTQTEKFNCNWKQPVFPKIHLDNNLFQKLENYFGPLTTNEKRRLKLVFPARFFPNATKYFPLLKGIKDKYPNYTIEHFFAAANYLWTLWESGILYLRKNQTTLTFRGKPYSWEHRQLEQHNGQQHKSNIRSQQISCMVANSGNLLYTHYHRDKSSNIQTRNLSDNVFKKSKESTRVRCYTYDKIQRNRLGQLARIPCESKAPSEQQQSSLRSKGRDFRNQIQAYNSSRNKGYTTWHSTTSDSIQSGSKKKTHTSNSSFERHTPSFDNEKSDRSPAGICRGTESSNHLRSSQLCLWRSFYYTKPCGTYCLHHIVSSIDDWGPCTFDGDVTIRSPRTPRRITGGIFLVDKNPYNSSESRLVVDFSQFSRGHSRVHWPKFAVPNLQTLANLLSTNLQWLSLDVSAAFYHIPVSPAAVPHFLVGSPGLERFASCMSHDASNRNNSKLQTMHHICSRHLYNTLLLLFKTYGRKLHLLAHPFIMGFRKLPMGVGLSPFLLAQFTSALTSMVRRNFPHCLAFAYMDDLVLGARSYEHLTAVYSHICSVFLDLGIHLNVEKTKWWGHTLHFMGYTINGAGVLPQDKHVHKVTTYLKSIPINQPLDYKICERLTGILNYVAPFTKCGYAALLPLYQAIASHTAFVFSSLYKNWLLSLYGELWPVARQRGVVCSVFADATPTGWGICTTCQLISGTFGFSLPIATAELIAACLARCWTGARLLGTDNSVVLSGKLTSFPWLLACVANWILRGTSFCYVPSADNPADLPSRGLLPALRPLPLLRFRPVTKRISLWAASPPVSTRRPVRVAWASPVQTCEPWIPP.

Positions 1–184 (MHPFYQLFRN…GKPYSWEHRQ (184 aa)) are terminal protein domain (TP). The spacer stretch occupies residues 185–384 (LEQHNGQQHK…YCLHHIVSSI (200 aa)). Positions 263-351 (IPCESKAPSE…PAGICRGTES (89 aa)) are disordered. 2 stretches are compositionally biased toward polar residues: residues 270–279 (PSEQQQSSLR) and 287–314 (NQIQ…IQSG). Residues 326-340 (FERHTPSFDNEKSDR) are compositionally biased toward basic and acidic residues. Positions 385-726 (DDWGPCTFDG…YGELWPVARQ (342 aa)) are polymerase/reverse transcriptase domain (RT). Residues 395-636 (DVTIRSPRTP…HTLHFMGYTI (242 aa)) form the Reverse transcriptase domain. Mg(2+)-binding residues include D467, D587, and D588.

It belongs to the hepadnaviridae P protein family.

The catalysed reaction is DNA(n) + a 2'-deoxyribonucleoside 5'-triphosphate = DNA(n+1) + diphosphate. It catalyses the reaction Endonucleolytic cleavage to 5'-phosphomonoester.. With respect to regulation, activated by host HSP70 and HSP40 in vitro to be able to bind the epsilon loop of the pgRNA. Because deletion of the RNase H region renders the protein partly chaperone-independent, the chaperones may be needed indirectly to relieve occlusion of the RNA-binding site by this domain. Inhibited by several reverse-transcriptase inhibitors: Lamivudine, Adefovir and Entecavir. Functionally, multifunctional enzyme that converts the viral RNA genome into dsDNA in viral cytoplasmic capsids. This enzyme displays a DNA polymerase activity that can copy either DNA or RNA templates, and a ribonuclease H (RNase H) activity that cleaves the RNA strand of RNA-DNA heteroduplexes in a partially processive 3'- to 5'-endonucleasic mode. Neo-synthesized pregenomic RNA (pgRNA) are encapsidated together with the P protein, and reverse-transcribed inside the nucleocapsid. Initiation of reverse-transcription occurs first by binding the epsilon loop on the pgRNA genome, and is initiated by protein priming, thereby the 5'-end of (-)DNA is covalently linked to P protein. Partial (+)DNA is synthesized from the (-)DNA template and generates the relaxed circular DNA (RC-DNA) genome. After budding and infection, the RC-DNA migrates in the nucleus, and is converted into a plasmid-like covalently closed circular DNA (cccDNA). The activity of P protein does not seem to be necessary for cccDNA generation, and is presumably released from (+)DNA by host nuclear DNA repair machinery. This is Protein P from Ground squirrel hepatitis virus (strain 27) (GSHV).